A 153-amino-acid polypeptide reads, in one-letter code: Interleukin-4 (153 aa).

Residues 1 to 24 (MGLTSQLLPPLFFLLACAGNFVHG) form the signal peptide. 3 disulfide bridges follow: C27-C151, C48-C89, and C70-C123. An N-linked (GlcNAc...) asparagine glycan is attached at N62.

It belongs to the IL-4/IL-13 family.

It is found in the secreted. In terms of biological role, participates in at least several B-cell activation processes as well as of other cell types. It is a costimulator of DNA-synthesis. It induces the expression of class II MHC molecules on resting B-cells. It enhances both secretion and cell surface expression of IgE and IgG1. It also regulates the expression of the low affinity Fc receptor for IgE (CD23) on both lymphocytes and monocytes. Positively regulates IL31RA expression in macrophages. Stimulates autophagy in dendritic cells by interfering with mTORC1 signaling and through the induction of RUFY4. The polypeptide is Interleukin-4 (IL4) (Macaca fascicularis (Crab-eating macaque)).